Consider the following 127-residue polypeptide: uncharacterized protein (127 aa).

Residues 91–113 traverse the membrane as a helical segment; it reads IYLIVSIAVSILAIIAFFIFLML.

It is found in the membrane. This is an uncharacterized protein from Bacillus subtilis (strain 168).